Here is an 878-residue protein sequence, read N- to C-terminus: Ecdysone receptor (878 aa).

Disordered stretches follow at residues Met1 to Asn27 and Gly209 to Gly254. The segment at Met1 to Leu263 is modulating. 2 NR C4-type zinc fingers span residues Cys264–Cys284 and Cys300–Cys324. The segment at residues Cys264–Pro336 is a DNA-binding region (nuclear receptor). The disordered stretch occupies residues Arg344–Gly374. A compositionally biased stretch (gly residues) spans Gly365–Gly374. Residues Asn419–Ala654 enclose the NR LBD domain. Composition is skewed to low complexity over residues Thr698–Pro709 and Gln728–Pro759. Positions Thr698–Pro759 are disordered.

This sequence belongs to the nuclear hormone receptor family. NR1 subfamily. As to quaternary structure, heterodimer of USP and ECR. Only the heterodimer is capable of high-affinity binding to ecdysone. Interacts with trr in an ecdysone-dependent manner. Upon ecdysone stimulation, interacts with Nup98. Isoform B1 predominates over isoform A in larval tissues, imaginal histoblast nests and midgut islands. Isoform A predominates over B1 in imaginal disks, and the larval prothoracic gland.

It localises to the nucleus. Receptor for ecdysone. Binds to ecdysone response elements (ECRES) following ecdysone-binding, and recruitment of a complex containing the histone methyltransferase trr, leads to activate transcription of target genes. In Drosophila melanogaster (Fruit fly), this protein is Ecdysone receptor (EcR).